The following is a 506-amino-acid chain: Cytochrome P450 monooxygenase atr2 (506 aa).

A helical transmembrane segment spans residues V18 to F38. Residue C451 coordinates heme.

Belongs to the cytochrome P450 family. It depends on heme as a cofactor.

It localises to the membrane. The catalysed reaction is 4-O-demethylbarbatate + reduced [NADPH--hemoprotein reductase] + O2 = proatranorin II + oxidized [NADPH--hemoprotein reductase] + H2O + H(+). It carries out the reaction proatranorin II + reduced [NADPH--hemoprotein reductase] + O2 = proatranorin III + oxidized [NADPH--hemoprotein reductase] + 2 H2O + H(+). The enzyme catalyses proatranorin I + reduced [NADPH--hemoprotein reductase] + O2 = proatranorin IV + oxidized [NADPH--hemoprotein reductase] + H2O + H(+). It catalyses the reaction proatranorin IV + reduced [NADPH--hemoprotein reductase] + O2 = atranorin + oxidized [NADPH--hemoprotein reductase] + 2 H2O + H(+). It functions in the pathway secondary metabolite biosynthesis; terpenoid biosynthesis. Its function is as follows. Cytochrome P450 monooxygenase; part of the gene cluster that mediates the biosynthesis of atranorin, a depside of polyketide origin that accumulates in the cortical or medullary layers of lichen thalli. Atr2 performs the oxidation at the C-9 position of 4-O-demethylbarbatic acid to yield proatranorin III via proatranorin II. Atr2 is also able to oxidize the atr3 product proatranorin I to produce the final compound atranorin. The first step in the pathway is performed by the non-reducing polyketide synthase atr1 that produces 4-O-demethylbarbatic acid composed of two 3-methylorsellinic acid (3MOA) moieties. The pathway continues with the actions of the cytochrome P450 monooygenase atr2 that catalizes the oxidation of c-9 and the O-methyltransferase atr3 that performs the methylation of the carboxyl group to yield atranorin, via the proatranorin II and III intermediates if atr2 acts first, or the proatranorin I intermediate if atr3 acts first. This Stereocaulon alpinum (Alpine snow lichen) protein is Cytochrome P450 monooxygenase atr2.